The following is a 422-amino-acid chain: Monoacylglycerol lipase ABHD2 (422 aa).

Over 1 to 15 the chain is Cytoplasmic; it reads MSAQLEADVRTMSPE. A helical; Signal-anchor for type II membrane protein transmembrane segment spans residues 16 to 36; it reads MPAMFDGMKLAAVAAVLYVIV. The Extracellular portion of the chain corresponds to 37-422; that stretch reads RSLNLKCPTA…HKPQCHQQKE (386 aa). In terms of domain architecture, AB hydrolase-1 spans 134-385; it reads MVICPGIGNH…HGGHLGFFEG (252 aa). Asn142 is a glycosylation site (N-linked (GlcNAc...) asparagine). Ser213 acts as the Nucleophile in catalysis. 3 N-linked (GlcNAc...) asparagine glycosylation sites follow: Asn285, Asn335, and Asn344. Catalysis depends on charge relay system residues Asp348 and His379.

It belongs to the AB hydrolase superfamily. AB hydrolase 4 family.

It localises to the cell membrane. The enzyme catalyses Hydrolyzes glycerol monoesters of long-chain fatty acids.. It catalyses the reaction an acetyl ester + H2O = an aliphatic alcohol + acetate + H(+). It carries out the reaction a triacylglycerol + H2O = a diacylglycerol + a fatty acid + H(+). The catalysed reaction is 2-(5Z,8Z,11Z,14Z-eicosatetraenoyl)-glycerol + H2O = glycerol + (5Z,8Z,11Z,14Z)-eicosatetraenoate + H(+). The enzyme catalyses a butanoate ester + H2O = an aliphatic alcohol + butanoate + H(+). It catalyses the reaction hexadecanoate ester + H2O = an aliphatic alcohol + hexadecanoate + H(+). Acylglycerol lipase activity is activated upon binding to progesterone. Its function is as follows. Progesterone-dependent acylglycerol lipase that catalyzes hydrolysis of endocannabinoid arachidonoylglycerol (AG) from cell membrane. Acts as a progesterone receptor: progesterone-binding activates the acylglycerol lipase activity, mediating degradation of 1-arachidonoylglycerol (1AG) and 2-arachidonoylglycerol (2AG) to glycerol and arachidonic acid (AA). Also displays an ester hydrolase activity against acetyl ester, butanoate ester and hexadecanoate ester. Plays a key role in sperm capacitation in response to progesterone by mediating degradation of 2AG, an inhibitor of the sperm calcium channel CatSper, leading to calcium influx via CatSper and sperm activation. May also play a role in smooth muscle cells migration. In Danio rerio (Zebrafish), this protein is Monoacylglycerol lipase ABHD2 (abhd2b).